The following is a 201-amino-acid chain: Ras-related protein Rab-9A (201 aa).

An N-acetylalanine modification is found at Ala2. Gly17 is a GDP binding site. Gly17, Val18, Gly19, Lys20, Ser21, Ser22, Thr34, His38, and Thr39 together coordinate GTP. GDP is bound by residues Gly19, Lys20, Ser21, and Ser22. Ser21 lines the Mg(2+) pocket. The Switch 1 signature appears at 31–42 (KFDTQLFHTIGV). 2 residues coordinate Mg(2+): Thr39 and Asp62. The Switch 2 signature appears at 64–78 (AGQERFRSLRTPFYR). Residues Gly65, Asn124, Lys125, and Asp127 each contribute to the GTP site. 5 residues coordinate GDP: Asn124, Lys125, Asp127, Ala155, and Lys156. Position 156 (Lys156) interacts with GTP. Position 179 is a phosphoserine (Ser179). Thr187 is subject to Phosphothreonine. S-geranylgeranyl cysteine attachment occurs at residues Cys200 and Cys201.

It belongs to the small GTPase superfamily. Rab family. As to quaternary structure, interacts (preferentially in its GTP-bound form) with GCC2 (via its GRIP domain). Interacts (GTP-bound form) with SGSM1; the GDP-bound form has much lower affinity for SGSM1. Interacts with SGSM2. The GTP-bound form but not the GDP-bound form interacts with HPS4 and the BLOC-3 complex (heterodimer of HPS1 and HPS4) but does not interact with HPS1 alone. Interacts (GTP-bound form) with NDE1; two RAB9A-GTP molecules lie on the opposite sides of the NDE1 homodimer; the interaction leads to RAB9A-dynein motor tethering. Interacts (GTP-bound form) with NDEL1. It depends on Mg(2+) as a cofactor.

It localises to the cell membrane. Its subcellular location is the endoplasmic reticulum membrane. The protein localises to the golgi apparatus membrane. It is found in the late endosome. The protein resides in the cytoplasmic vesicle. It localises to the phagosome membrane. Its subcellular location is the phagosome. The protein localises to the cytoplasmic vesicle membrane. It is found in the melanosome. It catalyses the reaction GTP + H2O = GDP + phosphate + H(+). Regulated by guanine nucleotide exchange factors (GEFs) which promote the exchange of bound GDP for free GTP. Regulated by GTPase activating proteins (GAPs) which increase the GTP hydrolysis activity. Inhibited by GDP dissociation inhibitors (GDIs). In terms of biological role, the small GTPases Rab are key regulators of intracellular membrane trafficking, from the formation of transport vesicles to their fusion with membranes. Rabs cycle between an inactive GDP-bound form and an active GTP-bound form that is able to recruit to membranes different sets of downstream effectors directly responsible for vesicle formation, movement, tethering and fusion. RAB9A is involved in the transport of proteins between the endosomes and the trans-Golgi network (TGN). Specifically uses NDE1/NDEL1 as an effector to interact with the dynein motor complex in order to control retrograde trafficking of RAB9-associated late endosomes to the TGN. Involved in the recruitment of SGSM2 to melanosomes and is required for the proper trafficking of melanogenic enzymes TYR, TYRP1 and DCT/TYRP2 to melanosomes in melanocytes. This chain is Ras-related protein Rab-9A (RAB9A), found in Canis lupus familiaris (Dog).